Consider the following 436-residue polypeptide: D-amino acid dehydrogenase (436 aa).

3–17 contacts FAD; it reads ILILGSGVIGVTSAW.

The protein belongs to the DadA oxidoreductase family. The cofactor is FAD.

The enzyme catalyses a D-alpha-amino acid + A + H2O = a 2-oxocarboxylate + AH2 + NH4(+). The protein operates within amino-acid degradation; D-alanine degradation; NH(3) and pyruvate from D-alanine: step 1/1. Oxidative deamination of D-amino acids. This Photorhabdus laumondii subsp. laumondii (strain DSM 15139 / CIP 105565 / TT01) (Photorhabdus luminescens subsp. laumondii) protein is D-amino acid dehydrogenase.